The sequence spans 566 residues: F-box/WD repeat-containing protein 5 (566 aa).

Residues 3–49 enclose the F-box domain; sequence EGGTPLLPDSLVYQIFLSLGPADVLAAGLVCRQWQAVSRDEFLWREQ. WD repeat units lie at residues 83-125, 126-178, 179-238, and 239-281; these read VEVQ…DLTI, SLLH…LDSF, ALLS…VKRL, and FKIQ…RIFD. Ser151 carries the phosphoserine; by PLK4 modification. Position 284 is a phosphoserine (Ser284). A D-box motif is present at residues 303-311; that stretch reads RHFLDRVLE. 3 WD repeats span residues 394-447, 458-501, and 502-539; these read ALDH…DLLV, RALR…RHYN, and ICLARLRHEDVVNSVVFSPQEQELLLTASDDATIKAWR.

It belongs to the FBXW5 family. As to quaternary structure, part of the SCF (SKP1-CUL1-F-box) E3 ubiquitin-protein ligase complex SCF(FBXW5) composed of CUL1, SKP1, RBX1 and FBXW5. Component of the DCX(FBXW5) E3 ubiquitin ligase complex, at least composed of (CUL4A or CUL4B), DDB1, FBXW5 and RBX1. Interacts with CDC20, EPS8, TSC1, TSC2 and SASS6. Interacts with TNFAIP8L1; TNFAIP8L1 competes with TSC2 to bind FBXW5 increasing TSC2 stability by preventing its ubiquitination. In terms of processing, phosphorylated at Ser-151 by PLK4 during the G1/S transition, leading to inhibit its ability to ubiquitinate SASS6. Post-translationally, ubiquitinated and degraded by the APC/C complex during mitosis and G1 phase.

Its subcellular location is the cytoplasm. The protein operates within protein modification; protein ubiquitination. Functionally, substrate recognition component of both SCF (SKP1-CUL1-F-box protein) and DCX (DDB1-CUL4-X-box) E3 ubiquitin-protein ligase complexes. Substrate recognition component of the SCF(FBXW5) E3 ubiquitin-protein ligase complex which mediates the ubiquitination and subsequent proteasomal degradation of SASS6 during S phase, leading to prevent centriole reduplication. The SCF(FBXW5) complex also mediates ubiquitination and degradation of actin-regulator EPS8 during G2 phase, leading to the transient degradation of EPS8 and subsequent cell shape changes required to allow mitotic progression. Substrate-specific adapter of the DCX(FBXW5) E3 ubiquitin-protein ligase complex which mediates the polyubiquitination and subsequent degradation of TSC2. May also act as a negative regulator of MAP3K7/TAK1 signaling in the interleukin-1B (IL1B) signaling pathway. The chain is F-box/WD repeat-containing protein 5 (FBXW5) from Homo sapiens (Human).